A 283-amino-acid polypeptide reads, in one-letter code: ATP phosphoribosyltransferase (283 aa).

It belongs to the ATP phosphoribosyltransferase family. Long subfamily. Equilibrium between an active dimeric form, an inactive hexameric form and higher aggregates. Interconversion between the various forms is largely reversible and is influenced by the natural substrates and inhibitors of the enzyme. It depends on Mg(2+) as a cofactor.

It localises to the cytoplasm. It catalyses the reaction 1-(5-phospho-beta-D-ribosyl)-ATP + diphosphate = 5-phospho-alpha-D-ribose 1-diphosphate + ATP. It functions in the pathway amino-acid biosynthesis; L-histidine biosynthesis; L-histidine from 5-phospho-alpha-D-ribose 1-diphosphate: step 1/9. Feedback inhibited by histidine. Functionally, catalyzes the condensation of ATP and 5-phosphoribose 1-diphosphate to form N'-(5'-phosphoribosyl)-ATP (PR-ATP). Has a crucial role in the pathway because the rate of histidine biosynthesis seems to be controlled primarily by regulation of HisG enzymatic activity. The chain is ATP phosphoribosyltransferase from Mycobacterium sp. (strain KMS).